The chain runs to 167 residues: NAD(P)H-quinone oxidoreductase subunit I, chloroplastic (167 aa).

4Fe-4S ferredoxin-type domains are found at residues 55 to 84 and 95 to 124; these read GRIH…VDWK and LNYS…MTEE. The [4Fe-4S] cluster site is built by Cys-64, Cys-67, Cys-70, Cys-74, Cys-104, Cys-107, Cys-110, and Cys-114.

This sequence belongs to the complex I 23 kDa subunit family. NDH is composed of at least 16 different subunits, 5 of which are encoded in the nucleus. It depends on [4Fe-4S] cluster as a cofactor.

The protein resides in the plastid. It localises to the chloroplast thylakoid membrane. The enzyme catalyses a plastoquinone + NADH + (n+1) H(+)(in) = a plastoquinol + NAD(+) + n H(+)(out). It catalyses the reaction a plastoquinone + NADPH + (n+1) H(+)(in) = a plastoquinol + NADP(+) + n H(+)(out). Functionally, NDH shuttles electrons from NAD(P)H:plastoquinone, via FMN and iron-sulfur (Fe-S) centers, to quinones in the photosynthetic chain and possibly in a chloroplast respiratory chain. The immediate electron acceptor for the enzyme in this species is believed to be plastoquinone. Couples the redox reaction to proton translocation, and thus conserves the redox energy in a proton gradient. This is NAD(P)H-quinone oxidoreductase subunit I, chloroplastic from Arabis hirsuta (Hairy rock-cress).